A 664-amino-acid chain; its full sequence is DNA ligase (664 aa).

Residues 32 to 36 (DAEYD), 81 to 82 (SL), and E113 each bind NAD(+). K115 functions as the N6-AMP-lysine intermediate in the catalytic mechanism. The NAD(+) site is built by R136, E173, K289, and K313. Positions 407, 410, 425, and 431 each coordinate Zn(2+). Residues 586 to 664 (ASEQPFAGKT…EEQLQAALQS (79 aa)) form the BRCT domain.

It belongs to the NAD-dependent DNA ligase family. LigA subfamily. It depends on Mg(2+) as a cofactor. Mn(2+) serves as cofactor.

The catalysed reaction is NAD(+) + (deoxyribonucleotide)n-3'-hydroxyl + 5'-phospho-(deoxyribonucleotide)m = (deoxyribonucleotide)n+m + AMP + beta-nicotinamide D-nucleotide.. DNA ligase that catalyzes the formation of phosphodiester linkages between 5'-phosphoryl and 3'-hydroxyl groups in double-stranded DNA using NAD as a coenzyme and as the energy source for the reaction. It is essential for DNA replication and repair of damaged DNA. In Aeromonas salmonicida (strain A449), this protein is DNA ligase.